A 124-amino-acid chain; its full sequence is Probable dihydroneopterin aldolase (124 aa).

Substrate contacts are provided by residues Glu-23, Tyr-56, and 75 to 76 (IE). Catalysis depends on Lys-103, which acts as the Proton donor/acceptor.

The protein belongs to the DHNA family.

The enzyme catalyses 7,8-dihydroneopterin = 6-hydroxymethyl-7,8-dihydropterin + glycolaldehyde. The protein operates within cofactor biosynthesis; tetrahydrofolate biosynthesis; 2-amino-4-hydroxy-6-hydroxymethyl-7,8-dihydropteridine diphosphate from 7,8-dihydroneopterin triphosphate: step 3/4. Its function is as follows. Catalyzes the conversion of 7,8-dihydroneopterin to 6-hydroxymethyl-7,8-dihydropterin. This chain is Probable dihydroneopterin aldolase (folB), found in Chlamydia trachomatis serovar D (strain ATCC VR-885 / DSM 19411 / UW-3/Cx).